The following is a 405-amino-acid chain: Venom serine protease 34 (405 aa).

Positions 1–35 (MIFTNNIAAFQNVVLVKKVKIVLLIFYGSIMFSMT) are cleaved as a signal peptide. 2 cysteine pairs are disulfide-bonded: C42–C70 and C95–C111. The region spanning 42–147 (CDYYQNLNLG…EVRPIKRVKD (106 aa)) is the CUB domain. N-linked (GlcNAc...) asparagine glycosylation occurs at N113. The region spanning 161–397 (IVGGTNTGIN…YIDWIVSQTP (237 aa)) is the Peptidase S1 domain. Residues C188 and C204 are joined by a disulfide bond. The active-site Charge relay system is H203. N-linked (GlcNAc...) asparagine glycosylation is found at N209 and N229. D257 (charge relay system) is an active-site residue. Disulfide bonds link C323–C336 and C345–C375. S349 acts as the Charge relay system in catalysis.

Belongs to the peptidase S1 family. In terms of tissue distribution, expressed by the venom duct.

It localises to the secreted. This chain is Venom serine protease 34, found in Apis mellifera (Honeybee).